Here is a 228-residue protein sequence, read N- to C-terminus: UPF0173 metal-dependent hydrolase LMHCC_0991 (228 aa).

It belongs to the UPF0173 family.

The chain is UPF0173 metal-dependent hydrolase LMHCC_0991 from Listeria monocytogenes serotype 4a (strain HCC23).